The following is a 171-amino-acid chain: UPF0303 protein YPTS_2661 (171 aa).

This sequence belongs to the UPF0303 family.

The chain is UPF0303 protein YPTS_2661 from Yersinia pseudotuberculosis serotype IB (strain PB1/+).